We begin with the raw amino-acid sequence, 29 residues long: Toxin II.9 (29 aa).

One can recognise an LCN-type CS-alpha/beta domain in the interval 2-29 (KDGYLVNKYTGCKVNCYKLGENKFCNRE).

Belongs to the long (4 C-C) scorpion toxin superfamily. Sodium channel inhibitor family. Beta subfamily. Expressed by the venom gland.

It localises to the secreted. Binds to sodium channels (Nav) and shift the voltage of activation toward more negative potentials. This toxin is active on crustaceans. The polypeptide is Toxin II.9 (Centruroides limpidus (Mexican scorpion)).